The primary structure comprises 275 residues: ATP synthase subunit delta (275 aa).

This sequence belongs to the ATPase delta chain family. As to quaternary structure, F-type ATPases have 2 components, F(1) - the catalytic core - and F(0) - the membrane proton channel. F(1) has five subunits: alpha(3), beta(3), gamma(1), delta(1), epsilon(1). F(0) has three main subunits: a(1), b(2) and c(10-14). The alpha and beta chains form an alternating ring which encloses part of the gamma chain. F(1) is attached to F(0) by a central stalk formed by the gamma and epsilon chains, while a peripheral stalk is formed by the delta and b chains.

The protein resides in the cell membrane. Functionally, f(1)F(0) ATP synthase produces ATP from ADP in the presence of a proton or sodium gradient. F-type ATPases consist of two structural domains, F(1) containing the extramembraneous catalytic core and F(0) containing the membrane proton channel, linked together by a central stalk and a peripheral stalk. During catalysis, ATP synthesis in the catalytic domain of F(1) is coupled via a rotary mechanism of the central stalk subunits to proton translocation. Its function is as follows. This protein is part of the stalk that links CF(0) to CF(1). It either transmits conformational changes from CF(0) to CF(1) or is implicated in proton conduction. This Arthrobacter sp. (strain FB24) protein is ATP synthase subunit delta.